Here is a 223-residue protein sequence, read N- to C-terminus: Deoxyribose-phosphate aldolase (223 aa).

Asp89 acts as the Proton donor/acceptor in catalysis. The active-site Schiff-base intermediate with acetaldehyde is the Lys152. Lys181 (proton donor/acceptor) is an active-site residue.

The protein belongs to the DeoC/FbaB aldolase family. DeoC type 1 subfamily.

The protein resides in the cytoplasm. The enzyme catalyses 2-deoxy-D-ribose 5-phosphate = D-glyceraldehyde 3-phosphate + acetaldehyde. The protein operates within carbohydrate degradation; 2-deoxy-D-ribose 1-phosphate degradation; D-glyceraldehyde 3-phosphate and acetaldehyde from 2-deoxy-alpha-D-ribose 1-phosphate: step 2/2. Its function is as follows. Catalyzes a reversible aldol reaction between acetaldehyde and D-glyceraldehyde 3-phosphate to generate 2-deoxy-D-ribose 5-phosphate. In Bacillus cereus (strain Q1), this protein is Deoxyribose-phosphate aldolase.